The following is a 467-amino-acid chain: Methylenetetrahydrofolate--tRNA-(uracil-5-)-methyltransferase TrmFO (467 aa).

11–16 is an FAD binding site; it reads GAGLAG.

Belongs to the MnmG family. TrmFO subfamily. It depends on FAD as a cofactor.

It is found in the cytoplasm. The catalysed reaction is uridine(54) in tRNA + (6R)-5,10-methylene-5,6,7,8-tetrahydrofolate + NADH + H(+) = 5-methyluridine(54) in tRNA + (6S)-5,6,7,8-tetrahydrofolate + NAD(+). It catalyses the reaction uridine(54) in tRNA + (6R)-5,10-methylene-5,6,7,8-tetrahydrofolate + NADPH + H(+) = 5-methyluridine(54) in tRNA + (6S)-5,6,7,8-tetrahydrofolate + NADP(+). Its function is as follows. Catalyzes the folate-dependent formation of 5-methyl-uridine at position 54 (M-5-U54) in all tRNAs. This Prochlorococcus marinus (strain NATL2A) protein is Methylenetetrahydrofolate--tRNA-(uracil-5-)-methyltransferase TrmFO.